Here is a 203-residue protein sequence, read N- to C-terminus: MKLFKKLGILLLITSLILLAACKNSEESSSSSEDTNNATDTNTSESQDISVNGPEKVGDVYEIDGGTAKVMAISNKETTVKTGPIQFTVKKVIAAVANEQLPFIDVQIESENTSDEVVRFRPSLAQLATSTGVQIDEPSLLESDRLLDEYVGKVNDSGSIIYVFDNEEDIKDLESIRLRISSPFNEDLKNLGDKLDLKINLEH.

The N-terminal stretch at 1–21 (MKLFKKLGILLLITSLILLAA) is a signal peptide. C22 carries N-palmitoyl cysteine lipidation. The S-diacylglycerol cysteine moiety is linked to residue C22. Residues 27 to 46 (ESSSSSEDTNNATDTNTSES) are compositionally biased toward low complexity. The tract at residues 27 to 57 (ESSSSSEDTNNATDTNTSESQDISVNGPEKV) is disordered.

It localises to the cell membrane. This is SPbeta prophage-derived uncharacterized lipoprotein YonS (yonS) from Bacillus subtilis (strain 168).